An 866-amino-acid chain; its full sequence is Sphingomyelin phosphodiesterase 4 (866 aa).

Phosphoserine is present on residues serine 169 and serine 285. Residue threonine 708 is modified to Phosphothreonine. Serine 792 is modified (phosphoserine). Residues 822–842 (LLLAFFVASLFCVGPLPCTLL) form a helical membrane-spanning segment.

The cofactor is Mg(2+). Widely expressed, with highest levels in heart and skeletal muscle. In terms of tissue distribution, expressed in skeletal muscle (at protein level). As to expression, expressed in skeletal muscle but a lower levels than isoform 1 (at protein level).

It is found in the endoplasmic reticulum membrane. Its subcellular location is the golgi apparatus membrane. The protein resides in the nucleus envelope. It localises to the cell membrane. The protein localises to the sarcolemma. It catalyses the reaction a sphingomyelin + H2O = phosphocholine + an N-acylsphing-4-enine + H(+). Activated by phosphatidylserine and tumor necrosis factor (TNF). Inhibited by scyphostatin. Functionally, catalyzes the hydrolysis of membrane sphingomyelin to form phosphorylcholine and ceramide. It has a relevant role in the homeostasis of membrane sphingolipids, thereby influencing membrane integrity, and endoplasmic reticulum organization and function. May sensitize cells to DNA damage-induced apoptosis. In skeletal muscle, mediates TNF-stimulated oxidant production. The protein is Sphingomyelin phosphodiesterase 4 of Homo sapiens (Human).